A 479-amino-acid chain; its full sequence is UDP-N-acetylmuramate--L-alanine ligase (479 aa).

Residue 128–134 coordinates ATP; that stretch reads GAHGKTT.

It belongs to the MurCDEF family.

It localises to the cytoplasm. It catalyses the reaction UDP-N-acetyl-alpha-D-muramate + L-alanine + ATP = UDP-N-acetyl-alpha-D-muramoyl-L-alanine + ADP + phosphate + H(+). It functions in the pathway cell wall biogenesis; peptidoglycan biosynthesis. Cell wall formation. This Psychrobacter cryohalolentis (strain ATCC BAA-1226 / DSM 17306 / VKM B-2378 / K5) protein is UDP-N-acetylmuramate--L-alanine ligase.